Consider the following 204-residue polypeptide: UPF0637 protein SaurJH9_1166 (204 aa).

It belongs to the UPF0637 family.

The chain is UPF0637 protein SaurJH9_1166 from Staphylococcus aureus (strain JH9).